The sequence spans 386 residues: Probable Xaa-Pro aminopeptidase PMAA_074180 (386 aa).

D160, D171, E311, and E350 together coordinate Mn(2+).

The protein belongs to the peptidase M24B family. Mn(2+) is required as a cofactor.

The enzyme catalyses Release of any N-terminal amino acid, including proline, that is linked to proline, even from a dipeptide or tripeptide.. Functionally, catalyzes the removal of a penultimate prolyl residue from the N-termini of peptides. This chain is Probable Xaa-Pro aminopeptidase PMAA_074180, found in Talaromyces marneffei (strain ATCC 18224 / CBS 334.59 / QM 7333) (Penicillium marneffei).